The sequence spans 57 residues: Three-finger toxin Tschuditoxin-I (57 aa).

3 disulfides stabilise this stretch: C3-C22, C17-C39, and C41-C52.

As to expression, expressed by the venom gland.

It localises to the secreted. Its function is as follows. Produces peripheral paralysis by blocking neuromuscular transmission at the postsynaptic site. Binds to and inhibits the endogenous nicotinic acetylcholine receptors (nAChR). This neurotoxin is lethal to mice by intraperitoneal or intravenous injection. In Micrurus tschudii (Desert coral snake), this protein is Three-finger toxin Tschuditoxin-I.